A 512-amino-acid chain; its full sequence is DNA damage-binding protein CMR1 (512 aa).

The interval 32 to 96 (SQIKREAGVE…IPNVNDNQLL (65 aa)) is disordered. Basic and acidic residues predominate over residues 34 to 46 (IKREAGVEDEHLD). Positions 47–60 (RKRKKKAGSAKKAV) are enriched in basic residues. WD repeat units lie at residues 189–230 (LTAE…PEDE), 241–281 (LFTK…SEEI), 289–329 (DDPL…TEIN), 333–373 (LSDK…NKPE), 390–429 (DSRLSVSAVSYSPMDETLVCNGYDDTIRLFDVSGTLPEDL), 442–481 (GRWTSILKARFKLNMDVFAIANMKRAIDIYTSSGVQLAHL), and 482–512 (PTATVPAVISWHPTQNWVVGGNSSGKAFLFT).

The protein belongs to the WD repeat DDB2/WDR76 family.

Functionally, DNA-binding protein that binds to both single- and double-stranded DNA. Binds preferentially to UV-damaged DNA. May be involved in DNA-metabolic processes. This chain is DNA damage-binding protein CMR1, found in Kluyveromyces lactis (strain ATCC 8585 / CBS 2359 / DSM 70799 / NBRC 1267 / NRRL Y-1140 / WM37) (Yeast).